The primary structure comprises 472 residues: MQSENYCGLLALRLLVSYHLKIHSQLDGINGNAFSIKIIVTHLFKRITRCISFVMCAIYYLQLYIKAWSSMKRYRKSLPALGVLILLGTTWTPVHTYAQIGFPDDKPAGGGGGDLTRQLATNVSTGIITGILNGTVPLQTALPILGFTNSTNQTCVCVPSGRCATTTVPTDGSGMIDVRIVTSQTSSPISPTPNIVTPPTCAAGLDRCCYPGPFQCGLQYPAVAAAKAPAAGQAYYGEYPWQAVLLGPGDIYVGSGALIDPLNVITAAHRISEYVSGARALRVRLGEWDASAASEPIPALEYTVSKFFVHPSYNAANLQNDIAMLRLSSAVPLGATPTITTACLPATSFVGTTCWVSGWGKNDFVSGSYQAIQKKVDVAVRSPADCQTALRTTRLGSTFVLDATSFVCAGGEAGKDACTGDGGSPLVCSLGGRYFVVGLVAWGIGCGTSNIPGVYVNVASYVPWITSTVSLA.

Transmembrane regions (helical) follow at residues 51-71 (ISFV…WSSM) and 78-98 (LPAL…HTYA). 4 N-linked (GlcNAc...) asparagine glycosylation sites follow: Asn122, Asn133, Asn149, and Asn152. In terms of domain architecture, Peptidase S1 spans 223-470 (VAAAKAPAAG…YVPWITSTVS (248 aa)). Disulfide bonds link Cys354–Cys428, Cys386–Cys408, and Cys418–Cys446.

The protein belongs to the peptidase S1 family. CLIP subfamily. In terms of tissue distribution, expressed at highest levels in head and salivary gland. Expressed in ovary and carcass. Minimal expression in midgut.

It is found in the membrane. Its function is as follows. Probable inactive serine protease. Induces migration of cultured mouse embryonic fibroblasts. (Microbial infection) Promotes dengue virus type 2 replication in the host. This is Inactive CLIP domain-containing serine protease A3 from Aedes aegypti (Yellowfever mosquito).